Consider the following 201-residue polypeptide: uncharacterized protein (201 aa).

This is an uncharacterized protein from Saccharomyces cerevisiae (strain ATCC 204508 / S288c) (Baker's yeast).